An 88-amino-acid chain; its full sequence is Small ribosomal subunit protein bS18 (88 aa).

The disordered stretch occupies residues 1–22 (MSTKNAKPKKEAQRRPSRKAKV).

Belongs to the bacterial ribosomal protein bS18 family. As to quaternary structure, part of the 30S ribosomal subunit. Forms a tight heterodimer with protein bS6.

Its function is as follows. Binds as a heterodimer with protein bS6 to the central domain of the 16S rRNA, where it helps stabilize the platform of the 30S subunit. In Thermus thermophilus (strain ATCC BAA-163 / DSM 7039 / HB27), this protein is Small ribosomal subunit protein bS18 (rpsR).